The primary structure comprises 272 residues: Undecaprenyl-diphosphatase (272 aa).

A run of 8 helical transmembrane segments spans residues 4 to 24, 43 to 63, 86 to 106, 109 to 129, 145 to 165, 186 to 206, 222 to 242, and 249 to 269; these read FEVI…FLPI, GGRV…CWLY, ISVL…VDFI, VLFS…IIFW, ITFK…IPGT, TEFS…FDLI, VGFV…VLFV, and VFAW…MFFN.

It belongs to the UppP family.

It is found in the cell inner membrane. It catalyses the reaction di-trans,octa-cis-undecaprenyl diphosphate + H2O = di-trans,octa-cis-undecaprenyl phosphate + phosphate + H(+). Catalyzes the dephosphorylation of undecaprenyl diphosphate (UPP). Confers resistance to bacitracin. The chain is Undecaprenyl-diphosphatase from Acinetobacter baumannii (strain SDF).